A 386-amino-acid polypeptide reads, in one-letter code: Acetate kinase (386 aa).

Position 7 (Asn-7) interacts with Mg(2+). Position 14 (Lys-14) interacts with ATP. Residue Arg-78 participates in substrate binding. The active-site Proton donor/acceptor is the Asp-135. Residues 195 to 199, 268 to 270, and 316 to 320 each bind ATP; these read HLGNG, DMR, and GIGEN. Glu-370 lines the Mg(2+) pocket.

Belongs to the acetokinase family. Homodimer. Mg(2+) serves as cofactor. The cofactor is Mn(2+).

The protein localises to the cytoplasm. The enzyme catalyses acetate + ATP = acetyl phosphate + ADP. Its pathway is metabolic intermediate biosynthesis; acetyl-CoA biosynthesis; acetyl-CoA from acetate: step 1/2. Functionally, catalyzes the formation of acetyl phosphate from acetate and ATP. Can also catalyze the reverse reaction. The protein is Acetate kinase of Pseudarthrobacter chlorophenolicus (strain ATCC 700700 / DSM 12829 / CIP 107037 / JCM 12360 / KCTC 9906 / NCIMB 13794 / A6) (Arthrobacter chlorophenolicus).